A 637-amino-acid chain; its full sequence is Biosynthetic arginine decarboxylase (637 aa).

Lys101 bears the N6-(pyridoxal phosphate)lysine mark. 286 to 296 (FDVGGGLAVDY) is a substrate binding site.

It belongs to the Orn/Lys/Arg decarboxylase class-II family. SpeA subfamily. Mg(2+) serves as cofactor. It depends on pyridoxal 5'-phosphate as a cofactor.

It catalyses the reaction L-arginine + H(+) = agmatine + CO2. Its pathway is amine and polyamine biosynthesis; agmatine biosynthesis; agmatine from L-arginine: step 1/1. Functionally, catalyzes the biosynthesis of agmatine from arginine. This Shewanella baltica (strain OS195) protein is Biosynthetic arginine decarboxylase.